Here is a 147-residue protein sequence, read N- to C-terminus: Large ribosomal subunit protein bL9 (147 aa).

It belongs to the bacterial ribosomal protein bL9 family.

Binds to the 23S rRNA. The chain is Large ribosomal subunit protein bL9 from Exiguobacterium sp. (strain ATCC BAA-1283 / AT1b).